The chain runs to 376 residues: 23S rRNA (uracil(747)-C(5))-methyltransferase RlmC (376 aa).

4 residues coordinate [4Fe-4S] cluster: Cys-3, Cys-11, Cys-14, and Cys-87. S-adenosyl-L-methionine contacts are provided by Gln-212, Phe-241, Glu-262, and Asn-307. Cys-334 (nucleophile) is an active-site residue.

This sequence belongs to the class I-like SAM-binding methyltransferase superfamily. RNA M5U methyltransferase family. RlmC subfamily.

It carries out the reaction uridine(747) in 23S rRNA + S-adenosyl-L-methionine = 5-methyluridine(747) in 23S rRNA + S-adenosyl-L-homocysteine + H(+). Its function is as follows. Catalyzes the formation of 5-methyl-uridine at position 747 (m5U747) in 23S rRNA. The chain is 23S rRNA (uracil(747)-C(5))-methyltransferase RlmC from Yersinia pseudotuberculosis serotype I (strain IP32953).